A 381-amino-acid polypeptide reads, in one-letter code: Acetylornithine deacetylase (381 aa).

His79 contributes to the Zn(2+) binding site. Residue Asp81 is part of the active site. Asp111 is a binding site for Zn(2+). The active site involves Glu143. 3 residues coordinate Zn(2+): Glu144, Glu168, and His354.

Belongs to the peptidase M20A family. ArgE subfamily. In terms of assembly, homodimer. Zn(2+) is required as a cofactor. Co(2+) serves as cofactor. Requires glutathione as cofactor.

The protein localises to the cytoplasm. It catalyses the reaction N(2)-acetyl-L-ornithine + H2O = L-ornithine + acetate. It functions in the pathway amino-acid biosynthesis; L-arginine biosynthesis; L-ornithine from N(2)-acetyl-L-ornithine (linear): step 1/1. In terms of biological role, catalyzes the hydrolysis of the amide bond of N(2)-acetylated L-amino acids. Cleaves the acetyl group from N-acetyl-L-ornithine to form L-ornithine, an intermediate in L-arginine biosynthesis pathway, and a branchpoint in the synthesis of polyamines. The chain is Acetylornithine deacetylase from Buchnera aphidicola subsp. Schizaphis graminum (strain Sg).